Here is a 273-residue protein sequence, read N- to C-terminus: Thymidylate synthase (273 aa).

Position 31 (Arg-31) interacts with dUMP. His-61 provides a ligand contact to (6R)-5,10-methylene-5,6,7,8-tetrahydrofolate. 136–137 (RR) contributes to the dUMP binding site. Residue Cys-156 is the Nucleophile of the active site. Residues 176 to 179 (RSAD), Asn-187, and 217 to 219 (HIY) contribute to the dUMP site. Residue Asp-179 coordinates (6R)-5,10-methylene-5,6,7,8-tetrahydrofolate. Ala-272 is a (6R)-5,10-methylene-5,6,7,8-tetrahydrofolate binding site.

The protein belongs to the thymidylate synthase family. Bacterial-type ThyA subfamily. Homodimer.

It is found in the cytoplasm. The enzyme catalyses dUMP + (6R)-5,10-methylene-5,6,7,8-tetrahydrofolate = 7,8-dihydrofolate + dTMP. It functions in the pathway pyrimidine metabolism; dTTP biosynthesis. Functionally, catalyzes the reductive methylation of 2'-deoxyuridine-5'-monophosphate (dUMP) to 2'-deoxythymidine-5'-monophosphate (dTMP) while utilizing 5,10-methylenetetrahydrofolate (mTHF) as the methyl donor and reductant in the reaction, yielding dihydrofolate (DHF) as a by-product. This enzymatic reaction provides an intracellular de novo source of dTMP, an essential precursor for DNA biosynthesis. This chain is Thymidylate synthase, found in Corynebacterium jeikeium (strain K411).